Reading from the N-terminus, the 535-residue chain is MATCIWLRSCGARRLGSTFPGCRLRPRAGGLVPASGPAPGPAQLRCYAGGLAGLSAALLRTDSFVGGRWLPAAATFPVQDPASGAALGMVADCGVREARAAVRAAYEAFCRWREVSAKERSSLLRKWYNLMIQNKDDLARIITAESGKPLKEAHGEILYSAFFLEWFSEEARRVYGDIIYTPAKDRRALVLKQPXGVAAVITPWNFPSAMITRKVGAALAAGCTVVVKPAEDTPFSALALAELASQAGIPSGVYNVIPCSRKNAKEVGEAICTDPLVSKISFTGSTTTGKILLHHAANSVKRVSMELGGLAPFIVFDSANVDQAVAGAMASKFRNTGQTCVCSNQFLVQRGIHDAFVKAFAEAMKKNLRVGNGFEEGTTQGPLINEKAVEKVEKQVNDAVSKGATVVTGGKRHQLGKNFFEPTLLCNVTQDMLCTHEETFGPLAPVIKFDTEEEAIAIANAADVGLAGYFYSQDPAQIWRVAEQLEVGMVGVNEGLISSVECPFGGVKQSGLGREGSKYGIDEYLELKYVCYGGL.

A mitochondrion-targeting transit peptide spans 1–47 (MATCIWLRSCGARRLGSTFPGCRLRPRAGGLVPASGPAPGPAQLRCY). Lys126 bears the N6-acetyllysine; alternate mark. N6-succinyllysine; alternate is present on Lys126. N6-succinyllysine occurs at positions 135 and 184. NAD(+)-binding positions include Arg213 and 228 to 231 (KPAE). Arg213 is a binding site for substrate. Lys265 carries the post-translational modification N6-acetyllysine; alternate. At Lys265 the chain carries N6-succinyllysine; alternate. An NAD(+)-binding site is contributed by 284-289 (GSTTTG). The active-site Proton acceptor is Glu306. Arg334 lines the substrate pocket. Catalysis depends on Cys340, which acts as the Nucleophile. Cys340 and Cys342 form a disulfide bridge. The residue at position 365 (Lys365) is an N6-acetyllysine. Lys402 is modified (N6-succinyllysine). Position 411 is an N6-acetyllysine (Lys411). Ser498 serves as a coordination point for substrate. At Ser499 the chain carries Phosphoserine.

It belongs to the aldehyde dehydrogenase family. As to quaternary structure, homotetramer.

It is found in the mitochondrion. The enzyme catalyses succinate semialdehyde + NAD(+) + H2O = succinate + NADH + 2 H(+). The protein operates within amino-acid degradation; 4-aminobutanoate degradation. With respect to regulation, redox-regulated. Inhibited under oxydizing conditions. Functionally, catalyzes one step in the degradation of the inhibitory neurotransmitter gamma-aminobutyric acid (GABA). The protein is Succinate-semialdehyde dehydrogenase, mitochondrial (ALDH5A1) of Pan troglodytes (Chimpanzee).